A 333-amino-acid chain; its full sequence is Cell division protein ZipA (333 aa).

Topologically, residues 1–5 (MQELR) are periplasmic. Residues 6–26 (LVLILVGALAIAALLFHGLWT) traverse the membrane as a helical segment. The Cytoplasmic segment spans residues 27–333 (SRKETSSKFG…KQRVKVFCRK (307 aa)). Over residues 72–81 (KEPAFAREEV) the composition is skewed to basic and acidic residues. The segment at 72–119 (KEPAFAREEVPTSDDPLFEGTVSSESNKFTQQEKPTVQQAQPQPQPQP) is disordered. A compositionally biased stretch (polar residues) spans 92 to 107 (TVSSESNKFTQQEKPT). The segment covering 108-119 (VQQAQPQPQPQP) has biased composition (low complexity).

This sequence belongs to the ZipA family. In terms of assembly, interacts with FtsZ via their C-terminal domains.

It is found in the cell inner membrane. In terms of biological role, essential cell division protein that stabilizes the FtsZ protofilaments by cross-linking them and that serves as a cytoplasmic membrane anchor for the Z ring. Also required for the recruitment to the septal ring of downstream cell division proteins. The chain is Cell division protein ZipA from Aliivibrio fischeri (strain ATCC 700601 / ES114) (Vibrio fischeri).